The primary structure comprises 218 residues: Elongation factor Ts (218 aa).

The interval 82–85 (TDFV) is involved in Mg(2+) ion dislocation from EF-Tu.

The protein belongs to the EF-Ts family.

It localises to the cytoplasm. Functionally, associates with the EF-Tu.GDP complex and induces the exchange of GDP to GTP. It remains bound to the aminoacyl-tRNA.EF-Tu.GTP complex up to the GTP hydrolysis stage on the ribosome. This Prochlorococcus marinus (strain MIT 9313) protein is Elongation factor Ts.